A 344-amino-acid polypeptide reads, in one-letter code: Lipase chaperone (344 aa).

A helical transmembrane segment spans residues alanine 14–alanine 34. The interval histidine 37–serine 78 is disordered. Low complexity predominate over residues serine 43–serine 78.

The protein belongs to the lipase chaperone family.

Its subcellular location is the cell inner membrane. In terms of biological role, may be involved in the folding of the extracellular lipase during its passage through the periplasm. This chain is Lipase chaperone (lifO), found in Burkholderia cepacia (Pseudomonas cepacia).